The chain runs to 303 residues: Probable 5-dehydro-4-deoxyglucarate dehydratase (303 aa).

This sequence belongs to the DapA family.

It carries out the reaction 5-dehydro-4-deoxy-D-glucarate + H(+) = 2,5-dioxopentanoate + CO2 + H2O. It functions in the pathway carbohydrate acid metabolism; D-glucarate degradation; 2,5-dioxopentanoate from D-glucarate: step 2/2. This chain is Probable 5-dehydro-4-deoxyglucarate dehydratase, found in Acidovorax ebreus (strain TPSY) (Diaphorobacter sp. (strain TPSY)).